Reading from the N-terminus, the 273-residue chain is Undecaprenyl-diphosphatase (273 aa).

The next 7 membrane-spanning stretches (helical) occupy residues 6 to 26 (SLLI…LPVS), 45 to 65 (AKTF…VMFW), 90 to 110 (LTLI…LLFH), 116 to 136 (LFNP…LIAA), 190 to 210 (YAAS…ATAL), 222 to 242 (GDIS…LIAI), and 252 to 272 (ISFI…YVVF).

Belongs to the UppP family.

Its subcellular location is the cell inner membrane. It catalyses the reaction di-trans,octa-cis-undecaprenyl diphosphate + H2O = di-trans,octa-cis-undecaprenyl phosphate + phosphate + H(+). Catalyzes the dephosphorylation of undecaprenyl diphosphate (UPP). Confers resistance to bacitracin. This chain is Undecaprenyl-diphosphatase, found in Shigella sonnei (strain Ss046).